Consider the following 386-residue polypeptide: Succinate--CoA ligase [ADP-forming] subunit beta (386 aa).

Positions 9–244 (KELLRKYGVV…FDEEDADEIE (236 aa)) constitute an ATP-grasp domain. Residues lysine 46, 53 to 55 (GRG), glutamate 99, alanine 102, and glutamate 107 each bind ATP. Mg(2+) is bound by residues asparagine 199 and aspartate 213. Substrate is bound by residues asparagine 264 and 321–323 (GIM).

It belongs to the succinate/malate CoA ligase beta subunit family. Heterotetramer of two alpha and two beta subunits. Mg(2+) is required as a cofactor.

It catalyses the reaction succinate + ATP + CoA = succinyl-CoA + ADP + phosphate. It carries out the reaction GTP + succinate + CoA = succinyl-CoA + GDP + phosphate. It functions in the pathway carbohydrate metabolism; tricarboxylic acid cycle; succinate from succinyl-CoA (ligase route): step 1/1. Its function is as follows. Succinyl-CoA synthetase functions in the citric acid cycle (TCA), coupling the hydrolysis of succinyl-CoA to the synthesis of either ATP or GTP and thus represents the only step of substrate-level phosphorylation in the TCA. The beta subunit provides nucleotide specificity of the enzyme and binds the substrate succinate, while the binding sites for coenzyme A and phosphate are found in the alpha subunit. In Aromatoleum aromaticum (strain DSM 19018 / LMG 30748 / EbN1) (Azoarcus sp. (strain EbN1)), this protein is Succinate--CoA ligase [ADP-forming] subunit beta.